We begin with the raw amino-acid sequence, 117 residues long: Large ribosomal subunit protein bL20 (117 aa).

Belongs to the bacterial ribosomal protein bL20 family.

Its function is as follows. Binds directly to 23S ribosomal RNA and is necessary for the in vitro assembly process of the 50S ribosomal subunit. It is not involved in the protein synthesizing functions of that subunit. The chain is Large ribosomal subunit protein bL20 from Mesomycoplasma hyopneumoniae (strain 232) (Mycoplasma hyopneumoniae).